Reading from the N-terminus, the 278-residue chain is Inosose isomerase (278 aa).

Glutamate 142, aspartate 174, histidine 200, and glutamate 246 together coordinate a divalent metal cation.

The protein belongs to the IolI family. The cofactor is Mn(2+). Fe(2+) is required as a cofactor. Requires Co(2+) as cofactor.

It catalyses the reaction scyllo-inosose = scyllo-inosine. It participates in polyol metabolism; myo-inositol degradation into acetyl-CoA. Involved in the reversible interconverion of 2-keto-myo-inositol (2KMI, inosose or 2,4,6/3,5-pentahydroxycyclohexanone) to 1-keto-D-chiro-inositol (1KDCI or 2,3,5/4,6-pentahydroxycyclohexanone). This is Inosose isomerase (iolI) from Bacillus subtilis (strain 168).